The sequence spans 185 residues: Small ribosomal subunit protein uS5 (185 aa).

Positions 29–92 (LEEKVVKINR…EKAKKQLVRI (64 aa)) constitute an S5 DRBM domain.

This sequence belongs to the universal ribosomal protein uS5 family. Part of the 30S ribosomal subunit. Contacts proteins S4 and S8.

Functionally, with S4 and S12 plays an important role in translational accuracy. Located at the back of the 30S subunit body where it stabilizes the conformation of the head with respect to the body. This Aster yellows witches'-broom phytoplasma (strain AYWB) protein is Small ribosomal subunit protein uS5.